The sequence spans 146 residues: VEWTDAEKSTISAVWGKVNIDEIGPLALARVLIVYPWTQRYFGSFGNVSTPAAIMGNPKVAAHGKVVCGALDKAVKNMGNILATYKSLSETHANKLFVDPDNFRVLADVLTIVIAAKFGASFTPEIQATWQKFMKVVVAAMGSRYF.

A Globin domain is found at 2 to 146 (EWTDAEKSTI…VVAAMGSRYF (145 aa)). Residues H63 and H92 each contribute to the heme b site.

This sequence belongs to the globin family. Heterotetramer of two alpha chains and two beta chains. As to expression, red blood cells.

In terms of biological role, involved in oxygen transport from gills to the various peripheral tissues. This chain is Hemoglobin subunit beta-1 (hbb1), found in Oncorhynchus mykiss (Rainbow trout).